The sequence spans 285 residues: Flagellar filament 30.7 kDa core protein (285 aa).

Belongs to the bacterial flagellin family. The core of the flagellum consists of several antigenically related polypeptides. Glycosylated. Glycosylation is not essential for motility.

It is found in the periplasmic flagellum. It localises to the periplasm. Component of the core of the flagella. This is Flagellar filament 30.7 kDa core protein (flaB3) from Treponema maltophilum.